We begin with the raw amino-acid sequence, 902 residues long: Potassium/sodium hyperpolarization-activated cyclic nucleotide-gated channel 1 (902 aa).

Residues 1 to 75 (MEGGGKPNSA…PAGSFEDAEG (75 aa)) are disordered. Residues 1-131 (MEGGGKPNSA…WIIHPYSDFR (131 aa)) are Cytoplasmic-facing. The chain crosses the membrane as a helical span at residues 132–153 (FYWDLIMLIMMVGNLVIIPVGI). The Extracellular segment spans residues 154–162 (TFFTEQTTT). Residues 163–183 (PWIIFNVASDTVFLLDLIMNF) traverse the membrane as a helical segment. Residues 184-204 (RTGTVNEDSSEIILDPKVIKM) lie on the Cytoplasmic side of the membrane. Residues 205–225 (NYLKSWFVVDFISSIPVDYIF) form a helical membrane-spanning segment. Residues 226–249 (LIVEKGMDSEVYKTARALRIVRFT) lie on the Extracellular side of the membrane. Residues 250–270 (KILSLLRLLRLSRLIRYIHQW) traverse the membrane as a helical; Voltage-sensor segment. Residues 271 to 284 (EEIFHMTYDLASAV) are Cytoplasmic-facing. Residues 285–307 (VRIFNLIGMMLLLCHWDGCLQFL) form a helical membrane-spanning segment. Topologically, residues 308–333 (VPLLQDFPPDCWVSLNEMVNDSWGKQ) are extracellular. Residue Asn-327 is glycosylated (N-linked (GlcNAc...) asparagine). The segment at residues 334–355 (YSYALFKAMSHMLCIGYGAQAP) is an intramembrane region (pore-forming). A Selectivity filter motif is present at residues 347-351 (CIGYG). Residues 356-360 (VSMSD) are Extracellular-facing. The helical transmembrane segment at 361–381 (LWITMLSMIVGATCYAMFVGH) threads the bilayer. Residues 382 to 902 (ATALIQSLDS…AEKPRFASNL (521 aa)) lie on the Cytoplasmic side of the membrane. Residues Gly-528, Glu-529, Cys-531, Arg-538, Thr-539, Arg-579, and Arg-582 each contribute to the 3',5'-cyclic AMP site. Disordered regions lie at residues 634–681 (TALN…QPSA), 713–824 (ASQL…VGES), and 858–902 (MSSG…ASNL). 3 stretches are compositionally biased toward low complexity: residues 639–680 (TSST…PQPS), 720–736 (QQPQ…QTQP), and 744–769 (QPQQ…QQPQ). Positions 770–793 (TPGSSTPKNEVHKSTQALHNTNLT) are enriched in polar residues. Over residues 867-877 (RGVPPAPPPPA) the composition is skewed to pro residues. The span at 889-902 (KDPDAEKPRFASNL) shows a compositional bias: basic and acidic residues.

This sequence belongs to the potassium channel HCN family. In terms of assembly, homotetramer. Heterotetramer with HCN2. The potassium channel is composed of a homo- or heterotetrameric complex of pore-forming subunits. Interacts with KCNE2. Interacts with the SH3 domain of CSK. As to expression, highly expressed in cerebral cortex, cerebellum, throughout the hippocampus, in medial habenula, anterior dorsal nucleus in the thalamus, tenia tecta, several nuclei of the general motor system and in optic nerve layer. Detected in a subset of elongated cells in taste buds.

It is found in the cell membrane. The enzyme catalyses Na(+)(in) = Na(+)(out). The catalysed reaction is K(+)(in) = K(+)(out). With respect to regulation, activated by cAMP, and at 10-100 times higher concentrations, also by cGMP. cAMP binding promotes tetramerization and formation of an active channel. Compared to other family members, cAMP has less stimulatory effect on HCN1 because part of the molecules already contain bound cAMP and form homotetramers when cAMP levels are low, this inherent tetramerization in HCN1 results in a weaker response to increased cAMP. Its function is as follows. Hyperpolarization-activated ion channel that are permeable to sodium and potassium ions. Exhibits weak selectivity for potassium over sodium ions. Contributes to the native pacemaker currents in heart (If) and in neurons (Ih). Participates in cerebellar mechanisms of motor learning. May mediate responses to sour stimuli. This chain is Potassium/sodium hyperpolarization-activated cyclic nucleotide-gated channel 1 (Hcn1), found in Rattus norvegicus (Rat).